The chain runs to 315 residues: Homoserine kinase (315 aa).

Pro-97–Thr-107 lines the ATP pocket.

It belongs to the GHMP kinase family. Homoserine kinase subfamily.

It localises to the cytoplasm. It catalyses the reaction L-homoserine + ATP = O-phospho-L-homoserine + ADP + H(+). It participates in amino-acid biosynthesis; L-threonine biosynthesis; L-threonine from L-aspartate: step 4/5. Functionally, catalyzes the ATP-dependent phosphorylation of L-homoserine to L-homoserine phosphate. In Synechococcus sp. (strain CC9311), this protein is Homoserine kinase.